The sequence spans 310 residues: Thioredoxin reductase (310 aa).

34–41 (NGMQPGGQ) is an FAD binding site. Cys135 and Cys138 are disulfide-bonded. 281-290 (DVQDKIYRQA) provides a ligand contact to FAD.

This sequence belongs to the class-II pyridine nucleotide-disulfide oxidoreductase family. In terms of assembly, homodimer. FAD serves as cofactor.

The protein resides in the cytoplasm. It catalyses the reaction [thioredoxin]-dithiol + NADP(+) = [thioredoxin]-disulfide + NADPH + H(+). The sequence is that of Thioredoxin reductase (trxB) from Rickettsia felis (strain ATCC VR-1525 / URRWXCal2) (Rickettsia azadi).